A 120-amino-acid chain; its full sequence is Fluoride-specific ion channel FluC (120 aa).

Helical transmembrane passes span 30–50 (FGTLAVNILGSLLMGILYGLL), 66–86 (VGFLGALTTFSTFSMDSLLLL), and 96–116 (LNIILNVMVCIFMAWLGLQLV). Na(+) contacts are provided by Gly-70 and Thr-73.

Belongs to the fluoride channel Fluc/FEX (TC 1.A.43) family.

It localises to the cell inner membrane. It carries out the reaction fluoride(in) = fluoride(out). Na(+) is not transported, but it plays an essential structural role and its presence is essential for fluoride channel function. Functionally, fluoride-specific ion channel. Important for reducing fluoride concentration in the cell, thus reducing its toxicity. In Pseudoalteromonas translucida (strain TAC 125), this protein is Fluoride-specific ion channel FluC.